Reading from the N-terminus, the 529-residue chain is Snake venom 5'-nucleotidase (529 aa).

Residue Gly1 is a signal peptide. 2 residues coordinate Zn(2+): Asp12 and His14. A disulfide bridge links Cys27 with Cys32. Asp60, Asn92, His195, and His218 together coordinate Zn(2+). Asn308 and Asn322 each carry an N-linked (GlcNAc...) asparagine glycan. Intrachain disulfides connect Cys328–Cys333 and Cys340–Cys362. Residue Arg329 coordinates AMP. The AMP site is built by Asn365, Arg370, and Phe393. The cysteines at positions 452 and 455 are disulfide-linked. The AMP site is built by Phe476 and Asp482. Ser525 carries GPI-anchor amidated serine lipidation. A propeptide spans 526 to 529 (AGSL) (removed in mature form).

Belongs to the 5'-nucleotidase family. Zn(2+) serves as cofactor. Post-translationally, venom 5'-nucleotidases (or a part thereof) may be released into the venom via exosome-like vesicles. They may be attached via a GPI anchor to the membrane of these vesicles. Soluble forms of 5'-nucleotidase might be released by cleavage of the ectodomain in the exosome-like vesicles or venom gland cells. In terms of tissue distribution, expressed by the venom gland.

The protein resides in the membrane. It catalyses the reaction a ribonucleoside 5'-phosphate + H2O = a ribonucleoside + phosphate. In terms of biological role, hydrolyzes nucleotides into nucleosides. Snake venom 5'-nucleotidases are widely distributed among venomous snake taxa, but there is a lack of information about their biological activities. They have been shown to inhibit platelet aggregation. This effect may be due to the liberation of inhibitory AMP or adenosine by its action on ADP released upon initiation of aggregation. Venom 5'-nucleotidases are also known to synergistically act in vivo with other toxins like ADPases, phospholipases, and disintegrins to exert a more pronounced anti-coagulant effect. In Naja atra (Chinese cobra), this protein is Snake venom 5'-nucleotidase.